Consider the following 330-residue polypeptide: Glycerol-3-phosphate dehydrogenase [NAD(P)+] (330 aa).

4 residues coordinate NADPH: S10, W11, R31, and K105. The sn-glycerol 3-phosphate site is built by K105, G135, and S137. A139 lines the NADPH pocket. K190, D243, S253, R254, and N255 together coordinate sn-glycerol 3-phosphate. The Proton acceptor role is filled by K190. Residue R254 participates in NADPH binding. The NADPH site is built by V278 and E280.

The protein belongs to the NAD-dependent glycerol-3-phosphate dehydrogenase family.

The protein localises to the cytoplasm. It carries out the reaction sn-glycerol 3-phosphate + NAD(+) = dihydroxyacetone phosphate + NADH + H(+). It catalyses the reaction sn-glycerol 3-phosphate + NADP(+) = dihydroxyacetone phosphate + NADPH + H(+). The protein operates within membrane lipid metabolism; glycerophospholipid metabolism. Its function is as follows. Catalyzes the reduction of the glycolytic intermediate dihydroxyacetone phosphate (DHAP) to sn-glycerol 3-phosphate (G3P), the key precursor for phospholipid synthesis. This Nitratidesulfovibrio vulgaris (strain DP4) (Desulfovibrio vulgaris) protein is Glycerol-3-phosphate dehydrogenase [NAD(P)+].